The sequence spans 519 residues: Signal transduction histidine-protein kinase/phosphatase MprB (519 aa).

Residues M1 to L26 are Cytoplasmic-facing. A helical membrane pass occupies residues L27–I47. Residues S48–R163 lie on the Extracellular side of the membrane. Residues W164–V184 traverse the membrane as a helical segment. The Cytoplasmic portion of the chain corresponds to T185 to R519. The HAMP domain maps to R186–E238. One can recognise a Histidine kinase domain in the interval D246 to P466. H249 is modified (phosphohistidine; by autocatalysis).

The cofactor is Mg(2+). It depends on Mn(2+) as a cofactor. Autophosphorylated.

It is found in the cell membrane. The enzyme catalyses ATP + protein L-histidine = ADP + protein N-phospho-L-histidine.. Its function is as follows. Member of the two-component regulatory system MprB/MprA which contributes to maintaining a balance among several systems involved in stress resistance and is required for establishment and maintenance of persistent infection in the host. In response to environmental signals MprB acts both as a membrane-associated protein kinase that undergoes autophosphorylation and subsequently transfers the phosphate to MprA, and a protein phosphatase that dephosphorylates phospho-MprA. This is Signal transduction histidine-protein kinase/phosphatase MprB (mprB) from Mycobacterium leprae (strain TN).